Consider the following 206-residue polypeptide: Dephospho-CoA kinase (206 aa).

In terms of domain architecture, DPCK spans 6–206; the sequence is IIGLTGGIAS…KWKWKDWSKK (201 aa). ATP is bound at residue 14–19; it reads ASGKST.

Belongs to the CoaE family.

Its subcellular location is the cytoplasm. It carries out the reaction 3'-dephospho-CoA + ATP = ADP + CoA + H(+). The protein operates within cofactor biosynthesis; coenzyme A biosynthesis; CoA from (R)-pantothenate: step 5/5. Catalyzes the phosphorylation of the 3'-hydroxyl group of dephosphocoenzyme A to form coenzyme A. This Carboxydothermus hydrogenoformans (strain ATCC BAA-161 / DSM 6008 / Z-2901) protein is Dephospho-CoA kinase.